A 338-amino-acid chain; its full sequence is Secretory carrier-associated membrane protein 1 (338 aa).

Residues 1–64 form a disordered region; it reads MSDFDSNPFA…NVPNTQPAIM (64 aa). Ser2 carries the post-translational modification N-acetylserine. Ser2 carries the post-translational modification Phosphoserine. Topologically, residues 2-155 are cytoplasmic; it reads SDFDSNPFAD…QKTVKLMYYL (154 aa). Thr45 carries the phosphothreonine modification. A helical transmembrane segment spans residues 156 to 176; it reads WMFHAVTLFLNIFGCLAWFCV. The Lumenal segment spans residues 177–181; that stretch reads DSARA. The chain crosses the membrane as a helical span at residues 182 to 202; the sequence is VDFGLSILWFLLFTPCSFVCW. The Cytoplasmic segment spans residues 203–218; sequence YRPLYGAFRSDSSFRF. Residues 219–239 traverse the membrane as a helical segment; the sequence is FVFFFVYICQFAVHVLQAAGF. At 240-261 the chain is on the lumenal side; the sequence is HNWGNCGWISSLTGLNQNIPVG. The helical transmembrane segment at 262 to 282 threads the bilayer; it reads IMMIIIAALFTASAVISLVMF. Residues 283 to 338 are Cytoplasmic-facing; it reads KKVHGLYRTTGASFEKAQQEFATGVMSNKTVQTAAANAASTAASSAAQNAFKGNQI.

The protein belongs to the SCAMP family. In terms of assembly, interacts with SYNRG and ITSN1. Interacts with SLC9A7. Widely expressed, with highest expression in brain.

It localises to the golgi apparatus. The protein resides in the trans-Golgi network membrane. It is found in the recycling endosome membrane. Functionally, functions in post-Golgi recycling pathways. Acts as a recycling carrier to the cell surface. This chain is Secretory carrier-associated membrane protein 1 (SCAMP1), found in Homo sapiens (Human).